A 251-amino-acid chain; its full sequence is Outer membrane protein assembly factor BamD (251 aa).

The signal sequence occupies residues 1–19; the sequence is MKLTKLLSALLVIGLVLGG. Residue C20 is the site of N-palmitoyl cysteine attachment. C20 is lipidated: S-diacylglycerol cysteine. TPR repeat units lie at residues 33–66, 70–103, and 166–199; these read IATL…HPGN, PQAE…HPAN, and AGKE…YQTT.

This sequence belongs to the BamD family. As to quaternary structure, part of the Bam complex.

The protein localises to the cell outer membrane. Functionally, part of the outer membrane protein assembly complex, which is involved in assembly and insertion of beta-barrel proteins into the outer membrane. The protein is Outer membrane protein assembly factor BamD of Rickettsia prowazekii (strain Madrid E).